We begin with the raw amino-acid sequence, 313 residues long: Extracellular metalloprotease (313 aa).

Residues 1 to 34 form the signal peptide; the sequence is MKLVPRFRKQWFAYLTVLCLALAAAVSFGVPAKA. The segment at 35–74 is disordered; the sequence is AENPQTSVSNTGKEADATKNQTSKADQVSAPYEGTGKTSK. Positions 35–93 are excised as a propeptide; it reads AENPQTSVSNTGKEADATKNQTSKADQVSAPYEGTGKTSKSLYGGQTELEKNIQTLQPS. Residues 37–60 are compositionally biased toward polar residues; that stretch reads NPQTSVSNTGKEADATKNQTSKAD. A disulfide bridge links Cys-131 with Cys-147. Active-site charge relay system residues include His-146 and Ser-267.

This sequence belongs to the peptidase S1B family. As to quaternary structure, monomer.

The protein localises to the secreted. This Bacillus subtilis (strain 168) protein is Extracellular metalloprotease (mpr).